Reading from the N-terminus, the 398-residue chain is Succinate--CoA ligase [ADP-forming] subunit beta (398 aa).

The ATP-grasp domain maps to 9 to 253 (KELLKSYGVA…EAEEDPKELE (245 aa)). Residues K46, 53-55 (GRG), E108, C111, and E116 contribute to the ATP site. Mg(2+) contacts are provided by N208 and D222. Substrate contacts are provided by residues N273 and 330-332 (GIM).

This sequence belongs to the succinate/malate CoA ligase beta subunit family. In terms of assembly, heterotetramer of two alpha and two beta subunits. The cofactor is Mg(2+).

The catalysed reaction is succinate + ATP + CoA = succinyl-CoA + ADP + phosphate. It carries out the reaction GTP + succinate + CoA = succinyl-CoA + GDP + phosphate. It functions in the pathway carbohydrate metabolism; tricarboxylic acid cycle; succinate from succinyl-CoA (ligase route): step 1/1. In terms of biological role, succinyl-CoA synthetase functions in the citric acid cycle (TCA), coupling the hydrolysis of succinyl-CoA to the synthesis of either ATP or GTP and thus represents the only step of substrate-level phosphorylation in the TCA. The beta subunit provides nucleotide specificity of the enzyme and binds the substrate succinate, while the binding sites for coenzyme A and phosphate are found in the alpha subunit. The polypeptide is Succinate--CoA ligase [ADP-forming] subunit beta (Acidiphilium cryptum (strain JF-5)).